We begin with the raw amino-acid sequence, 415 residues long: Serine hydroxymethyltransferase (415 aa).

(6S)-5,6,7,8-tetrahydrofolate is bound by residues leucine 117 and 121–123 (GHL). Lysine 226 is subject to N6-(pyridoxal phosphate)lysine.

Belongs to the SHMT family. In terms of assembly, homodimer. Pyridoxal 5'-phosphate is required as a cofactor.

Its subcellular location is the cytoplasm. The enzyme catalyses (6R)-5,10-methylene-5,6,7,8-tetrahydrofolate + glycine + H2O = (6S)-5,6,7,8-tetrahydrofolate + L-serine. Its pathway is one-carbon metabolism; tetrahydrofolate interconversion. The protein operates within amino-acid biosynthesis; glycine biosynthesis; glycine from L-serine: step 1/1. In terms of biological role, catalyzes the reversible interconversion of serine and glycine with tetrahydrofolate (THF) serving as the one-carbon carrier. This reaction serves as the major source of one-carbon groups required for the biosynthesis of purines, thymidylate, methionine, and other important biomolecules. Also exhibits THF-independent aldolase activity toward beta-hydroxyamino acids, producing glycine and aldehydes, via a retro-aldol mechanism. This Dehalococcoides mccartyi (strain ATCC BAA-2266 / KCTC 15142 / 195) (Dehalococcoides ethenogenes (strain 195)) protein is Serine hydroxymethyltransferase.